We begin with the raw amino-acid sequence, 312 residues long: MEIIFYHPTFNAAWWVNALEKALPHARVREWKVGDNNPADYALVWQPPVEMLAGRRLKAVFALGAGVDAILSKLNAHPEMLDASIPLFRLEDTGMGLQMQEYAVSQVLHWFRRFDDYQALKNQALWKPLPEYTREEFSVGIMGAGVLGAKVAESLQAWGFPLRCWSRSRKSWPGVESYVGREELHAFLNQTRVLINLLPNTAQTVGIINSELLDQLPDGAYVLNLARGVHVQEADLLAALDSGKLKGAMLDVFSQEPLPQESPLWRHPRVAMTPHIAAVTRPAEAIDYISRTITQLEKGEPVTGQVDRARGY.

R227 is an active-site residue. H275 acts as the Proton donor in catalysis.

Belongs to the D-isomer specific 2-hydroxyacid dehydrogenase family. GhrA subfamily.

The protein resides in the cytoplasm. It carries out the reaction glycolate + NADP(+) = glyoxylate + NADPH + H(+). It catalyses the reaction (R)-glycerate + NAD(+) = 3-hydroxypyruvate + NADH + H(+). The catalysed reaction is (R)-glycerate + NADP(+) = 3-hydroxypyruvate + NADPH + H(+). In terms of biological role, catalyzes the NADPH-dependent reduction of glyoxylate and hydroxypyruvate into glycolate and glycerate, respectively. The protein is Glyoxylate/hydroxypyruvate reductase A of Salmonella agona (strain SL483).